We begin with the raw amino-acid sequence, 202 residues long: ATP-dependent Clp protease proteolytic subunit 2 (202 aa).

Catalysis depends on Ser-99, which acts as the Nucleophile. His-124 is a catalytic residue.

It belongs to the peptidase S14 family. In terms of assembly, fourteen ClpP subunits assemble into 2 heptameric rings which stack back to back to give a disk-like structure with a central cavity, resembling the structure of eukaryotic proteasomes.

It localises to the cytoplasm. The catalysed reaction is Hydrolysis of proteins to small peptides in the presence of ATP and magnesium. alpha-casein is the usual test substrate. In the absence of ATP, only oligopeptides shorter than five residues are hydrolyzed (such as succinyl-Leu-Tyr-|-NHMec, and Leu-Tyr-Leu-|-Tyr-Trp, in which cleavage of the -Tyr-|-Leu- and -Tyr-|-Trp bonds also occurs).. Functionally, cleaves peptides in various proteins in a process that requires ATP hydrolysis. Has a chymotrypsin-like activity. Plays a major role in the degradation of misfolded proteins. The polypeptide is ATP-dependent Clp protease proteolytic subunit 2 (Desulfitobacterium hafniense (strain Y51)).